A 921-amino-acid polypeptide reads, in one-letter code: Isoleucine--tRNA ligase (921 aa).

The short motif at 57 to 67 (PYANGELHMGH) is the 'HIGH' region element. Glu552 is a binding site for L-isoleucyl-5'-AMP. Positions 593-597 (KMSKS) match the 'KMSKS' region motif. Residue Lys596 coordinates ATP. Zn(2+)-binding residues include Cys888, Cys891, Cys908, and Cys911.

It belongs to the class-I aminoacyl-tRNA synthetase family. IleS type 1 subfamily. In terms of assembly, monomer. Zn(2+) serves as cofactor.

It localises to the cytoplasm. The catalysed reaction is tRNA(Ile) + L-isoleucine + ATP = L-isoleucyl-tRNA(Ile) + AMP + diphosphate. Catalyzes the attachment of isoleucine to tRNA(Ile). As IleRS can inadvertently accommodate and process structurally similar amino acids such as valine, to avoid such errors it has two additional distinct tRNA(Ile)-dependent editing activities. One activity is designated as 'pretransfer' editing and involves the hydrolysis of activated Val-AMP. The other activity is designated 'posttransfer' editing and involves deacylation of mischarged Val-tRNA(Ile). In Listeria innocua serovar 6a (strain ATCC BAA-680 / CLIP 11262), this protein is Isoleucine--tRNA ligase.